A 94-amino-acid chain; its full sequence is Large ribosomal subunit protein uL29 (94 aa).

The disordered stretch occupies residues 65–94; the sequence is ANPGERKSRVFSRAKRKKKNLARLSAKAKG. A compositionally biased stretch (basic residues) spans 73 to 94; it reads RVFSRAKRKKKNLARLSAKAKG.

This sequence belongs to the universal ribosomal protein uL29 family.

The protein is Large ribosomal subunit protein uL29 of Leptospira interrogans serogroup Icterohaemorrhagiae serovar copenhageni (strain Fiocruz L1-130).